The following is a 196-amino-acid chain: V-type proton ATPase subunit E (196 aa).

The protein belongs to the V-ATPase E subunit family.

In terms of biological role, produces ATP from ADP in the presence of a proton gradient across the membrane. The sequence is that of V-type proton ATPase subunit E from Clostridium botulinum (strain Alaska E43 / Type E3).